The sequence spans 205 residues: Anaerobic dimethyl sulfoxide reductase chain B (205 aa).

4Fe-4S ferredoxin-type domains lie at 5-33 (YGFFIDSSRCTGCKTCELACKDYKDLTPE), 59-89 (FAYYLSISCNHCEDPACTKVCPSGAMHKRED), and 90-119 (GFVVVDEDVCIGCRYCHMACPYGAPQYNET). Positions 14, 17, 20, 24, 67, 70, 75, 79, 99, 102, 105, 109, 126, 129, 141, and 145 each coordinate [4Fe-4S] cluster. The segment at 184 to 205 (KPNANSRPTGDTTGYLANPKEV) is disordered. The segment covering 186-195 (NANSRPTGDT) has biased composition (polar residues).

Heterotrimeric enzyme composed of a catalytic heterodimer (DmsAB) and a membrane anchor protein (DmsC). The cofactor is [4Fe-4S] cluster.

Functionally, electron transfer subunit of the terminal reductase during anaerobic growth on various sulfoxide and N-oxide compounds. The chain is Anaerobic dimethyl sulfoxide reductase chain B (dmsB) from Escherichia coli (strain K12).